The sequence spans 928 residues: Envelope glycoprotein B (928 aa).

A compositionally biased stretch (low complexity) spans 1–12; sequence MAARGGAERAAG. Disordered stretches follow at residues 1–25 and 67–105; these read MAAR…RHLR and GRPA…SPDN. The N-terminal stretch at 1-62 is a signal peptide; sequence MAARGGAERA…LWATWALLLA (62 aa). The Virion surface portion of the chain corresponds to 63–803; the sequence is APAAGRPATT…SGIASFIANP (741 aa). A compositionally biased stretch (pro residues) spans 71-95; it reads TTPPAPPPEEAASPAPPASPSPPGP. 2 N-linked (GlcNAc...) asparagine; by host glycosylation sites follow: Asn105 and Asn153. 5 disulfide bridges follow: Cys128–Cys606, Cys145–Cys562, Cys219–Cys283, Cys376–Cys424, and Cys627–Cys662. Involved in fusion and/or binding to host membrane stretches follow at residues 185–191 and 270–277; these read TWAGSTY and GSAGLYRT. N-linked (GlcNAc...) asparagine; by host glycans are attached at residues Asn442 and Asn484. The interval 495–525 is disordered; it reads APKPGPRRARRPRRLRPAPGRGQRARRRRHA. Residues 499-510 show a composition bias toward basic residues; the sequence is GPRRARRPRRLR. N-linked (GlcNAc...) asparagine; by host glycans are attached at residues Asn637 and Asn703. Hydrophobic membrane proximal region regions lie at residues 748–801 and 781–801; these read IDRV…SFIA and VVLG…SFIA. Residues 804–824 form a helical membrane-spanning segment; the sequence is FGALATGLLVLAGLVAAFLAY. The Intravirion portion of the chain corresponds to 825 to 928; it reads RYISRLRSNP…QLPMADVGGA (104 aa). Positions 876 to 879 match the Golgi targeting motif; sequence YMSL. The Internalization motif motif lies at 917–920; it reads YQQL.

It belongs to the herpesviridae glycoprotein B family. Homotrimer; disulfide-linked. Binds to heparan sulfate proteoglycans. Interacts with gH/gL heterodimer. In terms of processing, a proteolytic cleavage by host furin generates two subunits that remain linked by disulfide bonds.

It is found in the virion membrane. Its subcellular location is the host cell membrane. The protein localises to the host endosome membrane. The protein resides in the host Golgi apparatus membrane. Envelope glycoprotein that forms spikes at the surface of virion envelope. Essential for the initial attachment to heparan sulfate moieties of the host cell surface proteoglycans. Involved in fusion of viral and cellular membranes leading to virus entry into the host cell. Following initial binding to its host receptors, membrane fusion is mediated by the fusion machinery composed at least of gB and the heterodimer gH/gL. May be involved in the fusion between the virion envelope and the outer nuclear membrane during virion egress. This is Envelope glycoprotein B from Bovine herpesvirus 1.1 (strain P8-2) (BoHV-1).